We begin with the raw amino-acid sequence, 664 residues long: Two-component response regulator ARR2 (664 aa).

The disordered stretch occupies residues 1-21 (MVNPGHGRGPDSGTAAGGSNS). In terms of domain architecture, Response regulatory spans 29 to 144 (RVLVVDDDPT…ALKNIWQHVV (116 aa)). Residue Asp-80 is modified to 4-aspartylphosphate. Residues 151–215 (WNVSEHSGGS…DDKEDSSSLK (65 aa)) are disordered. The segment covering 165-178 (GGDRDRQQQHREDA) has biased composition (basic and acidic residues). Polar residues predominate over residues 180–191 (NNSSSVNEGNGR). Acidic residues predominate over residues 200–209 (EVDDQGDDKE). The Nuclear localization signal signature appears at 215–218 (KKPR). The segment at residues 218–268 (RVVWSVELHQQFVAAVNQLGVDKAVPKKILEMMNVPGLTRENVASHLQKYR) is a DNA-binding region (myb-like GARP). The segment covering 554–567 (AAFSTSEAYSSSST) has biased composition (low complexity). The tract at residues 554 to 589 (AAFSTSEAYSSSSTQRKRRETDATVVGEHGQNLQSP) is disordered.

The protein belongs to the ARR family. Type-B subfamily. In terms of assembly, binds the target DNA as a monomer. Interacts with histidine-containing phosphotransfer proteins. Post-translationally, two-component system major event consists of a His-to-Asp phosphorelay between a sensor histidine kinase (HK) and a response regulator (RR). In plants, the His-to-Asp phosphorelay involves an additional intermediate named Histidine-containing phosphotransfer protein (HPt). This multistep phosphorelay consists of a His-Asp-His-Asp sequential transfer of a phosphate group between first a His and an Asp of the HK protein, followed by the transfer to a conserved His of the HPt protein and finally the transfer to an Asp in the receiver domain of the RR protein. Phosphorylated in response to cytokinin mediated by AHK3. As to expression, detected in the whole plant. Predominantly expressed in pollen.

It localises to the nucleus. Its function is as follows. Transcriptional activator that binds specifically to the DNA sequence 5'-[AG]GATT-3'. Functions as a response regulator involved in His-to-Asp phosphorelay signal transduction system. Phosphorylation of the Asp residue in the receiver domain activates the ability of the protein to promote the transcription of target genes. Could directly activate some type-A response regulators in response to cytokinins. Involved in the expression of nuclear genes for components of mitochondrial complex I. Promotes cytokinin-mediated leaf longevity. Involved in the ethylene signaling pathway in an ETR1-dependent manner and in the cytokinin signaling pathway. This chain is Two-component response regulator ARR2 (ARR2), found in Arabidopsis thaliana (Mouse-ear cress).